We begin with the raw amino-acid sequence, 349 residues long: tRNA pseudouridine synthase D (349 aa).

Residue Phe27 coordinates substrate. Catalysis depends on Asp80, which acts as the Nucleophile. Substrate is bound at residue Asn129. Residues 155-303 enclose the TRUD domain; sequence GVPNYFGAQR…VEAARRAMLL (149 aa). A substrate-binding site is contributed by Phe329.

It belongs to the pseudouridine synthase TruD family.

It carries out the reaction uridine(13) in tRNA = pseudouridine(13) in tRNA. Its function is as follows. Responsible for synthesis of pseudouridine from uracil-13 in transfer RNAs. This Escherichia coli O127:H6 (strain E2348/69 / EPEC) protein is tRNA pseudouridine synthase D.